A 110-amino-acid chain; its full sequence is Iron-sulfur cluster assembly protein CyaY (110 aa).

The protein belongs to the frataxin family.

Its function is as follows. Involved in iron-sulfur (Fe-S) cluster assembly. May act as a regulator of Fe-S biogenesis. This is Iron-sulfur cluster assembly protein CyaY from Ectopseudomonas mendocina (strain ymp) (Pseudomonas mendocina).